The sequence spans 437 residues: F-box/FBD/LRR-repeat protein At5g22700 (437 aa).

Positions 5–51 (GDRISSLPDELLCQILSNLPTKNAVTTSILSTRWRSIWLSTPVLDID) constitute an F-box domain. LRR repeat units lie at residues 86–113 (RDDVDMCTIMPWIQDAVNRRIQHLEVDC), 134–160 (SLRLHFVTLHRYEFVSLPNLKVMHLEE), 161–186 (NIYYCLETLENFISSCPVLEDLTVVR), 187–210 (IVDIITEKILRVRSRSLNSLKLVL), 215–240 (GWFIDDIDEWKVIIDAPRLAYLSLKD), 272–297 (PVTFERSNVGKLLTGLSSIRDLTISG), and 322–350 (NARFYDCDLEMLPCVLESCPNLKSLVLGL). The FBD domain maps to 361-406 (RVSSVPPCFLSSLEFVEIRSRLCRKRYVMKVARYFAKNSVMLKKFV).

This is F-box/FBD/LRR-repeat protein At5g22700 from Arabidopsis thaliana (Mouse-ear cress).